The primary structure comprises 384 residues: MAP kinase-activated protein kinase 3 (384 aa).

N-acetylmethionine is present on Met1. The interval 1–33 is disordered; sequence MDGETAGEKGSLVPPPGALGGSALGGAPAPGVR. The region spanning 46–306 is the Protein kinase domain; sequence QLSKQVLGLG…IMQFMNHPWI (261 aa). Residues 52 to 60 and Lys75 contribute to the ATP site; that span reads LGLGVNGKV. Asp168 acts as the Proton acceptor in catalysis. Position 203 is a phosphothreonine; by MAPK14 (Thr203). At Ser253 the chain carries Phosphoserine; by MAPK14. A Phosphoserine; by autocatalysis modification is found at Ser309. The tract at residues 309-345 is autoinhibitory helix; that stretch reads SMVVPQTPLYTARVLQEDKDHWDDVKEEMTSALATMR. Thr315 carries the phosphothreonine; by MAPK14 modification. A Nuclear export signal (NES) motif is present at residues 337-346; the sequence is MTSALATMRV. The tract at residues 347-371 is p38 MAPK-binding site; that stretch reads DYDQVKIKDLKTSNNRLLNKRRKKQ. 2 consecutive short sequence motifs (bipartite nuclear localization signal) follow at residues 352-355 and 366-370; these read KIKD and KRRKK. A disordered region spans residues 359-384; that stretch reads SNNRLLNKRRKKQAGSSSASQGCNNQ. Positions 372-384 are enriched in polar residues; that stretch reads AGSSSASQGCNNQ.

The protein belongs to the protein kinase superfamily. CAMK Ser/Thr protein kinase family. As to quaternary structure, heterodimer with p38-alpha/MAPK14. The heterodimer with p38-alpha/MAPK14 forms a stable complex: molecules are positioned 'face to face' so that the ATP-binding sites of both kinases are at the heterodimer interface. Interacts with TCF3 and with polycomb proteins, such as PCH2 and BMI1/PCGF4. Post-translationally, phosphorylated and activated by MAPK1/ERK2 and MAPK3/ERK1. Phosphorylated and activated by MAP kinase p38-alpha/MAPK14 at Thr-201, Ser-251 and Thr-313. Isoform 3 is degraded following phosphorylation at Thr-203. In terms of tissue distribution, ubiquitously expressed (at protein level). Isoform 3 is expressed in skeletal muscles and heart.

It localises to the nucleus. The protein resides in the cytoplasm. The catalysed reaction is L-seryl-[protein] + ATP = O-phospho-L-seryl-[protein] + ADP + H(+). The enzyme catalyses L-threonyl-[protein] + ATP = O-phospho-L-threonyl-[protein] + ADP + H(+). Activated following phosphorylation by p38-alpha/MAPK14 following various stresses. Inhibited by ligand 5B (2'-[2-(1,3-benzodioxol-5-yl)pyrimidin-4-yl]-5',6'-dihydrospiro[piperidine-4,7'-pyrrolo[3,2-c]pyridin]- 4'(1'h)-one) and ligand P4O (2-[2-(2-fluorophenyl)pyridin-4-yl]-1,5,6,7-tetrahydro- 4h-pyrrolo[3,2-c]pyridin-4-one), 2 ATP-competitive inhibitors. Functionally, stress-activated serine/threonine-protein kinase involved in cytokines production, endocytosis, cell migration, chromatin remodeling and transcriptional regulation. Following stress, it is phosphorylated and activated by MAP kinase p38-alpha/MAPK14, leading to phosphorylation of substrates. Phosphorylates serine in the peptide sequence, Hyd-X-R-X(2)-S, where Hyd is a large hydrophobic residue. MAPKAPK2 and MAPKAPK3, share the same function and substrate specificity, but MAPKAPK3 kinase activity and level in protein expression are lower compared to MAPKAPK2. Phosphorylates HSP27/HSPB1, KRT18, KRT20, RCSD1, RPS6KA3, TAB3 and TTP/ZFP36. Mediates phosphorylation of HSP27/HSPB1 in response to stress, leading to dissociate HSP27/HSPB1 from large small heat-shock protein (sHsps) oligomers and impair their chaperone activities and ability to protect against oxidative stress effectively. Involved in inflammatory response by regulating tumor necrosis factor (TNF) and IL6 production post-transcriptionally: acts by phosphorylating AU-rich elements (AREs)-binding proteins, such as TTP/ZFP36, leading to regulate the stability and translation of TNF and IL6 mRNAs. Phosphorylation of TTP/ZFP36, a major post-transcriptional regulator of TNF, promotes its binding to 14-3-3 proteins and reduces its ARE mRNA affinity leading to inhibition of dependent degradation of ARE-containing transcript. Involved in toll-like receptor signaling pathway (TLR) in dendritic cells: required for acute TLR-induced macropinocytosis by phosphorylating and activating RPS6KA3. Also acts as a modulator of Polycomb-mediated repression. In Mus musculus (Mouse), this protein is MAP kinase-activated protein kinase 3 (Mapkapk3).